Reading from the N-terminus, the 263-residue chain is Indole-3-glycerol phosphate synthase (263 aa).

It belongs to the TrpC family.

It carries out the reaction 1-(2-carboxyphenylamino)-1-deoxy-D-ribulose 5-phosphate + H(+) = (1S,2R)-1-C-(indol-3-yl)glycerol 3-phosphate + CO2 + H2O. Its pathway is amino-acid biosynthesis; L-tryptophan biosynthesis; L-tryptophan from chorismate: step 4/5. This chain is Indole-3-glycerol phosphate synthase, found in Aliarcobacter butzleri (strain RM4018) (Arcobacter butzleri).